The sequence spans 257 residues: Imidazole glycerol phosphate synthase subunit HisF (257 aa).

Residues Asp12 and Asp131 contribute to the active site.

Belongs to the HisA/HisF family. Heterodimer of HisH and HisF.

It is found in the cytoplasm. It catalyses the reaction 5-[(5-phospho-1-deoxy-D-ribulos-1-ylimino)methylamino]-1-(5-phospho-beta-D-ribosyl)imidazole-4-carboxamide + L-glutamine = D-erythro-1-(imidazol-4-yl)glycerol 3-phosphate + 5-amino-1-(5-phospho-beta-D-ribosyl)imidazole-4-carboxamide + L-glutamate + H(+). The protein operates within amino-acid biosynthesis; L-histidine biosynthesis; L-histidine from 5-phospho-alpha-D-ribose 1-diphosphate: step 5/9. In terms of biological role, IGPS catalyzes the conversion of PRFAR and glutamine to IGP, AICAR and glutamate. The HisF subunit catalyzes the cyclization activity that produces IGP and AICAR from PRFAR using the ammonia provided by the HisH subunit. This is Imidazole glycerol phosphate synthase subunit HisF from Marinobacter nauticus (strain ATCC 700491 / DSM 11845 / VT8) (Marinobacter aquaeolei).